The primary structure comprises 158 residues: NAD(P)H-quinone oxidoreductase subunit J, chloroplastic (158 aa).

This sequence belongs to the complex I 30 kDa subunit family. In terms of assembly, NDH is composed of at least 16 different subunits, 5 of which are encoded in the nucleus.

Its subcellular location is the plastid. It is found in the chloroplast thylakoid membrane. It catalyses the reaction a plastoquinone + NADH + (n+1) H(+)(in) = a plastoquinol + NAD(+) + n H(+)(out). It carries out the reaction a plastoquinone + NADPH + (n+1) H(+)(in) = a plastoquinol + NADP(+) + n H(+)(out). NDH shuttles electrons from NAD(P)H:plastoquinone, via FMN and iron-sulfur (Fe-S) centers, to quinones in the photosynthetic chain and possibly in a chloroplast respiratory chain. The immediate electron acceptor for the enzyme in this species is believed to be plastoquinone. Couples the redox reaction to proton translocation, and thus conserves the redox energy in a proton gradient. This is NAD(P)H-quinone oxidoreductase subunit J, chloroplastic from Draba nemorosa (Woodland whitlowgrass).